A 735-amino-acid chain; its full sequence is Probable ATP-dependent RNA helicase DHR2 (735 aa).

Residues 1–13 (MAANSNSRVASNH) show a composition bias toward polar residues. Residues 1–29 (MAANSNSRVASNHTSKKQKVRRNIHPFTN) are disordered. Residues 14–24 (TSKKQKVRRNI) show a composition bias toward basic residues. One can recognise a Helicase ATP-binding domain in the interval 91-257 (MSYIESNPVT…FNNAPILFVE (167 aa)). ATP is bound at residue 104 to 111 (GETGSGKS). Residues 203 to 206 (DEAH) carry the DEAH box motif. Residues 262–456 (DVKQYYLKAP…SPVLMLKRYG (195 aa)) enclose the Helicase C-terminal domain.

It belongs to the DEAD box helicase family. DEAH subfamily. Interacts with NOP19. Interacts with UBP10.

It is found in the nucleus. It localises to the nucleolus. It catalyses the reaction ATP + H2O = ADP + phosphate + H(+). Probable ATP-binding RNA helicase. Required for 18S rRNA synthesis. The sequence is that of Probable ATP-dependent RNA helicase DHR2 (DHR2) from Saccharomyces cerevisiae (strain ATCC 204508 / S288c) (Baker's yeast).